Here is a 435-residue protein sequence, read N- to C-terminus: WD repeat domain phosphoinositide-interacting protein 2 (435 aa).

Residues Ala182–Glu222 form a WD 1 repeat. The short motif at Phe223–Gly226 is the L/FRRG motif element. WD repeat units follow at residues Lys228–Pro267 and Gly311–Cys349. Positions Val386 to Glu435 are disordered.

It belongs to the WD repeat PROPPIN family.

It is found in the preautophagosomal structure membrane. Functionally, component of the autophagy machinery that controls the major intracellular degradation process by which cytoplasmic materials are packaged into autophagosomes and delivered to lysosomes for degradation. Involved in an early step of the formation of preautophagosomal structures. The polypeptide is WD repeat domain phosphoinositide-interacting protein 2 (wipi2) (Xenopus laevis (African clawed frog)).